A 276-amino-acid polypeptide reads, in one-letter code: 4-deoxy-L-threo-5-hexosulose-uronate ketol-isomerase (276 aa).

Positions 194, 196, 201, and 243 each coordinate Zn(2+).

The protein belongs to the KduI family. The cofactor is Zn(2+).

It catalyses the reaction 5-dehydro-4-deoxy-D-glucuronate = 3-deoxy-D-glycero-2,5-hexodiulosonate. Its pathway is glycan metabolism; pectin degradation; 2-dehydro-3-deoxy-D-gluconate from pectin: step 4/5. In terms of biological role, catalyzes the isomerization of 5-dehydro-4-deoxy-D-glucuronate to 3-deoxy-D-glycero-2,5-hexodiulosonate. The polypeptide is 4-deoxy-L-threo-5-hexosulose-uronate ketol-isomerase (Shouchella clausii (strain KSM-K16) (Alkalihalobacillus clausii)).